Reading from the N-terminus, the 234-residue chain is Large ribosomal subunit protein uL1 (234 aa).

Belongs to the universal ribosomal protein uL1 family. In terms of assembly, part of the 50S ribosomal subunit.

Functionally, binds directly to 23S rRNA. The L1 stalk is quite mobile in the ribosome, and is involved in E site tRNA release. In terms of biological role, protein L1 is also a translational repressor protein, it controls the translation of the L11 operon by binding to its mRNA. This is Large ribosomal subunit protein uL1 from Campylobacter fetus subsp. fetus (strain 82-40).